Consider the following 115-residue polypeptide: Large ribosomal subunit protein bL19 (115 aa).

Belongs to the bacterial ribosomal protein bL19 family.

In terms of biological role, this protein is located at the 30S-50S ribosomal subunit interface and may play a role in the structure and function of the aminoacyl-tRNA binding site. The sequence is that of Large ribosomal subunit protein bL19 from Alkaliphilus oremlandii (strain OhILAs) (Clostridium oremlandii (strain OhILAs)).